The chain runs to 542 residues: Chaperonin GroEL 3 (542 aa).

ATP contacts are provided by residues 30–33, Lys-51, 87–91, Gly-415, and Asp-496; these read TLGP and DGTTT.

This sequence belongs to the chaperonin (HSP60) family. Forms a cylinder of 14 subunits composed of two heptameric rings stacked back-to-back. Interacts with the co-chaperonin GroES.

It is found in the cytoplasm. The enzyme catalyses ATP + H2O + a folded polypeptide = ADP + phosphate + an unfolded polypeptide.. Together with its co-chaperonin GroES, plays an essential role in assisting protein folding. The GroEL-GroES system forms a nano-cage that allows encapsulation of the non-native substrate proteins and provides a physical environment optimized to promote and accelerate protein folding. The sequence is that of Chaperonin GroEL 3 from Rhizobium johnstonii (strain DSM 114642 / LMG 32736 / 3841) (Rhizobium leguminosarum bv. viciae).